A 246-amino-acid chain; its full sequence is Probable transcriptional regulatory protein AHA_1522 (246 aa).

Belongs to the TACO1 family.

The protein resides in the cytoplasm. The sequence is that of Probable transcriptional regulatory protein AHA_1522 from Aeromonas hydrophila subsp. hydrophila (strain ATCC 7966 / DSM 30187 / BCRC 13018 / CCUG 14551 / JCM 1027 / KCTC 2358 / NCIMB 9240 / NCTC 8049).